A 210-amino-acid polypeptide reads, in one-letter code: MPPYTVVYFPVRGRCAALRMLLADQGQSWKEEVVTVETWQEGSLKASCLYGQLPKFQDGDLTLYQSNTILRHLGRTLGLYGKDQQEAALVDMVNDGVEDLRCKYISLIYTNYEAGKDDYVKALPGQLKPFETLLSQNQGGKTFIVGDQISFADYNLLDLLLIHEVLAPGCLDAFPLLSAYVGRLSARPKLKAFLASPEYVNLPINGNGKQ.

Residues 2 to 81 (PPYTVVYFPV…HLGRTLGLYG (80 aa)) form the GST N-terminal domain. The residue at position 4 (tyrosine 4) is a Phosphotyrosine; by EGFR. Residues tyrosine 8, arginine 14, tryptophan 39, lysine 45, and 52–53 (QL) contribute to the glutathione site. A Phosphothreonine modification is found at threonine 62. Residue 65-66 (QS) coordinates glutathione. A GST C-terminal domain is found at 83–204 (DQQEAALVDM…ASPEYVNLPI (122 aa)). An N6-succinyllysine mark is found at lysine 103 and lysine 116. Lysine 128 bears the N6-acetyllysine mark. The residue at position 199 (tyrosine 199) is a Phosphotyrosine; by EGFR.

It belongs to the GST superfamily. Pi family. Homodimer. Interacts with CDK5.

The protein localises to the cytoplasm. It is found in the mitochondrion. Its subcellular location is the nucleus. It catalyses the reaction RX + glutathione = an S-substituted glutathione + a halide anion + H(+). The catalysed reaction is prostaglandin J2 + glutathione = prostaglandin J2-S-(R)-glutathione. The enzyme catalyses prostaglandin J2 + glutathione = prostaglandin J2-S-(S)-glutathione. It carries out the reaction prostaglandin A2 + glutathione = prostaglandin A2-S-(S)-glutathione. It catalyses the reaction 11(S)-hydroxy-14(S),15(S)-epoxy-(5Z,8Z,12E)-eicosatrienoate + glutathione = (11S,15S)-dihydroxy-14(R)-S-glutathionyl-(5Z,8Z,12E)-eicosatrienoate. Its function is as follows. Conjugation of reduced glutathione to a wide number of exogenous and endogenous hydrophobic electrophiles. Involved in the formation of glutathione conjugates of both prostaglandin A2 (PGA2) and prostaglandin J2 (PGJ2). Participates in the formation of novel hepoxilin regioisomers. Negatively regulates CDK5 activity via p25/p35 translocation to prevent neurodegeneration. This chain is Glutathione S-transferase P, found in Homo sapiens (Human).